The sequence spans 231 residues: MQHTVDIQAIESKLNFTFSHPRLLITALTHPSYRNEFPSAEEDSERLEFLGDAVLGLVVTEHLFLLFPALNEGLLSTTRAALVNAEACFEYTQKLSLGEHLLIGRGEKMQSHRGKISAYANLFEAILGAVYLDGGLSPARQIIVPLLPDKESILPLMLVNPKNRLQQFTQQTLKVLPSYKALPWKSEDGSPGYHVQVFVNGDLWGEGFAGSKKEAEKLAAKQALSTHDNKN.

The RNase III domain occupies 7–135 (IQAIESKLNF…ILGAVYLDGG (129 aa)). Position 48 (Glu-48) interacts with Mg(2+). Asp-52 is a catalytic residue. Residues Asn-121 and Glu-124 each contribute to the Mg(2+) site. Glu-124 is a catalytic residue. One can recognise a DRBM domain in the interval 160–229 (NPKNRLQQFT…AKQALSTHDN (70 aa)).

It belongs to the ribonuclease III family. In terms of assembly, homodimer. The cofactor is Mg(2+).

It localises to the cytoplasm. The catalysed reaction is Endonucleolytic cleavage to 5'-phosphomonoester.. Functionally, digests double-stranded RNA. Involved in the processing of primary rRNA transcript to yield the immediate precursors to the large and small rRNAs (23S and 16S). Processes some mRNAs, and tRNAs when they are encoded in the rRNA operon. Processes pre-crRNA and tracrRNA of type II CRISPR loci if present in the organism. The chain is Ribonuclease 3 from Chlamydia trachomatis serovar L2 (strain ATCC VR-902B / DSM 19102 / 434/Bu).